The sequence spans 915 residues: Alpha-xylosidase 1 (915 aa).

The signal sequence occupies residues 1 to 27 (MASSSSSLAFSLSLLLALILCFSPTQS). 3 N-linked (GlcNAc...) asparagine glycosylation sites follow: N153, N304, and N375. Catalysis depends on residues D440 and E443. N476 and N490 each carry an N-linked (GlcNAc...) asparagine glycan. D563 serves as the catalytic Proton donor. N-linked (GlcNAc...) asparagine glycosylation is found at N819, N888, and N907.

This sequence belongs to the glycosyl hydrolase 31 family. As to expression, expressed in roots, stems, leaves, flowers and siliques. Expressed in cell types undergoing cell wall modifications, including trichomes, vasculature, stomata, and elongating anther filaments. Not detected in pollen.

The protein resides in the secreted. Its subcellular location is the cell wall. It is found in the extracellular space. The protein localises to the apoplast. The catalysed reaction is Hydrolysis of terminal, non-reducing alpha-D-xylose residues with release of alpha-D-xylose.. In terms of biological role, glycoside hydrolase releasing xylosyl residues from xyloglucan oligosaccharides at the non-reducing end. Has alpha-xylosidase activity against xylan oligosaccharides. Also has alpha-glucosidase activity against p-nitrophenyl-alpha-D-glucopyranoside. No activity against p-nitrophenyl-D-xyloside. The chain is Alpha-xylosidase 1 from Arabidopsis thaliana (Mouse-ear cress).